Here is a 229-residue protein sequence, read N- to C-terminus: UPF0128 protein aq_756 (229 aa).

This sequence belongs to the UPF0128 family.

The polypeptide is UPF0128 protein aq_756 (Aquifex aeolicus (strain VF5)).